A 147-amino-acid polypeptide reads, in one-letter code: uncharacterized protein (147 aa).

2 4Fe-4S ferredoxin-type domains span residues 80–109 and 110–141; these read WYPKIDYNRCKNCEKCISFCPRGVYDAENG and KVVVKYPYSCIVNCNACSIMCCENNAIIFPDE. Positions 89, 92, 95, 99, 119, 123, 126, and 130 each coordinate [4Fe-4S] cluster.

It depends on [4Fe-4S] cluster as a cofactor.

This is an uncharacterized protein from Methanocaldococcus jannaschii (strain ATCC 43067 / DSM 2661 / JAL-1 / JCM 10045 / NBRC 100440) (Methanococcus jannaschii).